The following is a 138-amino-acid chain: ATP synthase epsilon chain 2 (138 aa).

It belongs to the ATPase epsilon chain family. In terms of assembly, F-type ATPases have 2 components, CF(1) - the catalytic core - and CF(0) - the membrane proton channel. CF(1) has five subunits: alpha(3), beta(3), gamma(1), delta(1), epsilon(1). CF(0) has three main subunits: a, b and c.

The protein resides in the cell inner membrane. Produces ATP from ADP in the presence of a proton gradient across the membrane. This Syntrophotalea carbinolica (strain DSM 2380 / NBRC 103641 / GraBd1) (Pelobacter carbinolicus) protein is ATP synthase epsilon chain 2.